Here is a 501-residue protein sequence, read N- to C-terminus: ATP synthase subunit alpha (501 aa).

Residue 169–176 coordinates ATP; sequence GDRQTGKT.

The protein belongs to the ATPase alpha/beta chains family. As to quaternary structure, F-type ATPases have 2 components, CF(1) - the catalytic core - and CF(0) - the membrane proton channel. CF(1) has five subunits: alpha(3), beta(3), gamma(1), delta(1), epsilon(1). CF(0) has three main subunits: a(1), b(2) and c(9-12). The alpha and beta chains form an alternating ring which encloses part of the gamma chain. CF(1) is attached to CF(0) by a central stalk formed by the gamma and epsilon chains, while a peripheral stalk is formed by the delta and b chains.

It is found in the cell inner membrane. It catalyses the reaction ATP + H2O + 4 H(+)(in) = ADP + phosphate + 5 H(+)(out). Produces ATP from ADP in the presence of a proton gradient across the membrane. The alpha chain is a regulatory subunit. In Campylobacter jejuni subsp. jejuni serotype O:6 (strain 81116 / NCTC 11828), this protein is ATP synthase subunit alpha.